The primary structure comprises 324 residues: Glutathione synthetase (324 aa).

Positions 124-309 (KLAIAQFREF…VAGMFIDALE (186 aa)) constitute an ATP-grasp domain. Residue 150–206 (HAEQGDVIFKPLDGMGGAGIFRVGADGMNLGSVIETLTHNGTRTVMAQQYIPAIRDG) coordinates ATP. Mg(2+) is bound by residues E280 and N282.

This sequence belongs to the prokaryotic GSH synthase family. Mg(2+) serves as cofactor. The cofactor is Mn(2+).

The catalysed reaction is gamma-L-glutamyl-L-cysteine + glycine + ATP = glutathione + ADP + phosphate + H(+). It functions in the pathway sulfur metabolism; glutathione biosynthesis; glutathione from L-cysteine and L-glutamate: step 2/2. This chain is Glutathione synthetase, found in Ralstonia nicotianae (strain ATCC BAA-1114 / GMI1000) (Ralstonia solanacearum).